We begin with the raw amino-acid sequence, 271 residues long: Ribosomal RNA small subunit methyltransferase A (271 aa).

Residues histidine 11, leucine 13, glycine 38, glutamate 59, aspartate 84, and asparagine 109 each coordinate S-adenosyl-L-methionine.

Belongs to the class I-like SAM-binding methyltransferase superfamily. rRNA adenine N(6)-methyltransferase family. RsmA subfamily.

It localises to the cytoplasm. It catalyses the reaction adenosine(1518)/adenosine(1519) in 16S rRNA + 4 S-adenosyl-L-methionine = N(6)-dimethyladenosine(1518)/N(6)-dimethyladenosine(1519) in 16S rRNA + 4 S-adenosyl-L-homocysteine + 4 H(+). Specifically dimethylates two adjacent adenosines (A1518 and A1519) in the loop of a conserved hairpin near the 3'-end of 16S rRNA in the 30S particle. May play a critical role in biogenesis of 30S subunits. The chain is Ribosomal RNA small subunit methyltransferase A from Nostoc sp. (strain PCC 7120 / SAG 25.82 / UTEX 2576).